The chain runs to 252 residues: F-box protein At5g39250 (252 aa).

Positions 1 to 42 constitute an F-box domain; it reads MFSEEVLKNVFPLLEGEDLASCMGVCKQWRDIARDDFYWKCQ.

In Arabidopsis thaliana (Mouse-ear cress), this protein is F-box protein At5g39250.